The following is a 493-amino-acid chain: 3-octaprenyl-4-hydroxybenzoate carboxy-lyase (493 aa).

Asparagine 172 provides a ligand contact to Mn(2+). Prenylated FMN-binding positions include 175-177 (IYR), 189-191 (RWL), and 194-195 (RG). Glutamate 238 provides a ligand contact to Mn(2+). The active-site Proton donor is the aspartate 287.

The protein belongs to the UbiD family. As to quaternary structure, homohexamer. The cofactor is prenylated FMN. Mn(2+) is required as a cofactor.

The protein localises to the cell membrane. It carries out the reaction a 4-hydroxy-3-(all-trans-polyprenyl)benzoate + H(+) = a 2-(all-trans-polyprenyl)phenol + CO2. Its pathway is cofactor biosynthesis; ubiquinone biosynthesis. Its function is as follows. Catalyzes the decarboxylation of 3-octaprenyl-4-hydroxy benzoate to 2-octaprenylphenol, an intermediate step in ubiquinone biosynthesis. The chain is 3-octaprenyl-4-hydroxybenzoate carboxy-lyase from Shewanella baltica (strain OS195).